The following is a 291-amino-acid chain: tRNA dimethylallyltransferase (291 aa).

Residue 9–16 coordinates ATP; it reads GTTASGKT. Substrate is bound at residue 11 to 16; sequence TASGKT. The tract at residues 34 to 37 is interaction with substrate tRNA; it reads DSLC.

It belongs to the IPP transferase family. In terms of assembly, monomer. Mg(2+) serves as cofactor.

The enzyme catalyses adenosine(37) in tRNA + dimethylallyl diphosphate = N(6)-dimethylallyladenosine(37) in tRNA + diphosphate. Functionally, catalyzes the transfer of a dimethylallyl group onto the adenine at position 37 in tRNAs that read codons beginning with uridine, leading to the formation of N6-(dimethylallyl)adenosine (i(6)A). This chain is tRNA dimethylallyltransferase, found in Campylobacter lari (strain RM2100 / D67 / ATCC BAA-1060).